The following is a 726-amino-acid chain: Methionine--tRNA ligase (726 aa).

The short motif at 12–22 (PYVNNIPHLGN) is the 'HIGH' region element. Zn(2+) contacts are provided by Cys-143, Cys-146, Cys-155, and Cys-158. Residues 330–334 (KFSKS) carry the 'KMSKS' region motif. Residue Lys-333 coordinates ATP. One can recognise a tRNA-binding domain in the interval 562-667 (FSEQICLKTV…DNPIPGERVI (106 aa)).

The protein belongs to the class-I aminoacyl-tRNA synthetase family. MetG type 1 subfamily. As to quaternary structure, homodimer. The cofactor is Zn(2+).

The protein localises to the cytoplasm. The catalysed reaction is tRNA(Met) + L-methionine + ATP = L-methionyl-tRNA(Met) + AMP + diphosphate. Its function is as follows. Is required not only for elongation of protein synthesis but also for the initiation of all mRNA translation through initiator tRNA(fMet) aminoacylation. The polypeptide is Methionine--tRNA ligase (Borrelia duttonii (strain Ly)).